The sequence spans 511 residues: MEELKGYLEIDRSRQQDFLYPLLFQEYIYALAHDHGLNGSILYEPIENLGYVGYDKKSSSLVVKRLITRMYQQKHLVFFDNDPNQNKFVDHKKNFYSQMISEGFAVIVEIPFSLRLVSSLEGKDITKSHNLRSIHSTFPFLEDQFSHLNHVLDILIPYPIHLELLIQLLRCWIQDAPSLHLLRVLLYEYQNWNSLITKKKKNFSVFSNENQRLFLFLYNFYVYECESIFVFLRKQSVHLRSTSSRAFLERTHFYRKIENFIVVFRNVFQTNLWLFKDPFMHYVRYQGKSILASKGTPLLMNKWKYYLVNFWQCHFYLWSQPDRIHINQLSNHSLDFLGHLSSVRLKTSVVRSQTLDNSFIIDIAIKKFDTIVPIIPLIGSLAKAKFCNVSGHPISKPAWTDSSDSDIIDRFGRICRNLSHYYSGSSKKNSLYRVKYILRLSCARTLSRKHKSTVRSFLKRLGSKLLEEFLTEEEQVLSLIFPRVSSSSRRLDKERIWYLDIIRINDLANHS.

It belongs to the intron maturase 2 family. MatK subfamily.

Its subcellular location is the plastid. The protein localises to the chloroplast. In terms of biological role, usually encoded in the trnK tRNA gene intron. Probably assists in splicing its own and other chloroplast group II introns. The protein is Maturase K of Nandina domestica (Heavenly bamboo).